Here is a 76-residue protein sequence, read N- to C-terminus: Omega-conotoxin-like TxO1 (76 aa).

Residues Met1 to Ala22 form the signal peptide. Residues Asp23–Glu50 constitute a propeptide that is removed on maturation. 3 disulfide bridges follow: Cys52/Cys67, Cys59/Cys70, and Cys66/Cys75.

The protein belongs to the conotoxin O1 superfamily. As to expression, expressed by the venom duct.

Its subcellular location is the secreted. Its function is as follows. Omega-conotoxins act at presynaptic membranes, they bind and block voltage-gated calcium channels (Cav). This chain is Omega-conotoxin-like TxO1, found in Conus textile (Cloth-of-gold cone).